A 416-amino-acid chain; its full sequence is Leu/Ile/Val-binding protein homolog 4 (416 aa).

An N-terminal signal peptide occupies residues 1–26; the sequence is MSLKVFLQAGVACAALSLAGAAGASA.

Belongs to the leucine-binding protein family.

Its function is as follows. Component of an amino-acid transport system. This Brucella abortus (strain 2308) protein is Leu/Ile/Val-binding protein homolog 4.